Consider the following 249-residue polypeptide: Sec-independent protein translocase protein TatC (249 aa).

The next 6 helical transmembrane spans lie at 18–38 (VSVGTILVAFLGCFHFWKNIF), 69–89 (AIVISMPIIFWQLWLFIAPGL), 96–116 (VILPFVFFGSGMFLMGAAFSY), 151–171 (LILGFGVAFELPVLAYFLAKV), 187–207 (IVVIFIVAAIITPPDVVSQIF), and 208–228 (MALPLVGLYGLSILIAKMVNP).

Belongs to the TatC family. As to quaternary structure, the Tat system comprises two distinct complexes: a TatABC complex, containing multiple copies of TatA, TatB and TatC subunits, and a separate TatA complex, containing only TatA subunits. Substrates initially bind to the TatABC complex, which probably triggers association of the separate TatA complex to form the active translocon.

Its subcellular location is the cell inner membrane. Part of the twin-arginine translocation (Tat) system that transports large folded proteins containing a characteristic twin-arginine motif in their signal peptide across membranes. Together with TatB, TatC is part of a receptor directly interacting with Tat signal peptides. This chain is Sec-independent protein translocase protein TatC, found in Helicobacter pylori (strain J99 / ATCC 700824) (Campylobacter pylori J99).